An 864-amino-acid polypeptide reads, in one-letter code: DNA double-strand break repair Rad50 ATPase (864 aa).

Residues 32–38 (NGAGKSS) and Gln131 contribute to the ATP site. 2 coiled-coil regions span residues 176–319 (RELD…EKAI) and 376–413 (DIDKVNSLEQKVEETRKKQLNLRAQLAKVESLISEKNE). In terms of domain architecture, Zinc-hook spans 380-478 (VNSLEQKVEE…ELNKIEREYR (99 aa)). Zn(2+) contacts are provided by Cys426 and Cys429. Residues 440-697 (KIIKEAKSYI…DREKIINAIN (258 aa)) are a coiled coil.

It belongs to the SMC family. RAD50 subfamily. As to quaternary structure, homodimer. Forms a heterotetramer composed of two Mre11 subunits and two Rad50 subunits. Zn(2+) is required as a cofactor.

Functionally, part of the Rad50/Mre11 complex, which is involved in the early steps of DNA double-strand break (DSB) repair. The complex may facilitate opening of the processed DNA ends to aid in the recruitment of HerA and NurA. Rad50 controls the balance between DNA end bridging and DNA resection via ATP-dependent structural rearrangements of the Rad50/Mre11 complex. The polypeptide is DNA double-strand break repair Rad50 ATPase (Saccharolobus solfataricus (strain ATCC 35092 / DSM 1617 / JCM 11322 / P2) (Sulfolobus solfataricus)).